Consider the following 505-residue polypeptide: uncharacterized protein (505 aa).

The tract at residues 461–480 (RTDVHPGNSDDEGAYSSADS) is disordered.

To M.jannaschii MJ0787.

This is an uncharacterized protein from Methanothermobacter thermautotrophicus (strain ATCC 29096 / DSM 1053 / JCM 10044 / NBRC 100330 / Delta H) (Methanobacterium thermoautotrophicum).